A 203-amino-acid chain; its full sequence is Outer-membrane lipoprotein carrier protein (203 aa).

Positions 1-21 (MKKWLAISCLIAGVTSTAVYA) are cleaved as a signal peptide.

It belongs to the LolA family. Monomer.

Its subcellular location is the periplasm. Its function is as follows. Participates in the translocation of lipoproteins from the inner membrane to the outer membrane. Only forms a complex with a lipoprotein if the residue after the N-terminal Cys is not an aspartate (The Asp acts as a targeting signal to indicate that the lipoprotein should stay in the inner membrane). This Pectobacterium atrosepticum (strain SCRI 1043 / ATCC BAA-672) (Erwinia carotovora subsp. atroseptica) protein is Outer-membrane lipoprotein carrier protein.